The chain runs to 955 residues: 2-oxoglutarate dehydrogenase E1 component (955 aa).

This sequence belongs to the alpha-ketoglutarate dehydrogenase family. Homodimer. Part of the 2-oxoglutarate dehydrogenase (OGDH) complex composed of E1 (2-oxoglutarate dehydrogenase), E2 (dihydrolipoamide succinyltransferase) and E3 (dihydrolipoamide dehydrogenase); the complex contains multiple copies of the three enzymatic components (E1, E2 and E3). Thiamine diphosphate is required as a cofactor.

The enzyme catalyses N(6)-[(R)-lipoyl]-L-lysyl-[protein] + 2-oxoglutarate + H(+) = N(6)-[(R)-S(8)-succinyldihydrolipoyl]-L-lysyl-[protein] + CO2. E1 component of the 2-oxoglutarate dehydrogenase (OGDH) complex which catalyzes the decarboxylation of 2-oxoglutarate, the first step in the conversion of 2-oxoglutarate to succinyl-CoA and CO(2). In Bacillus cereus (strain AH820), this protein is 2-oxoglutarate dehydrogenase E1 component.